The chain runs to 311 residues: Cell division protein ZipA (311 aa).

Over 1–5 (MQELR) the chain is Periplasmic. A helical membrane pass occupies residues 6 to 26 (FVLIVVGALAIMALLFHGLWT). Residues 27–311 (SKKEGKAKFG…QIVEFKAANA (285 aa)) lie on the Cytoplasmic side of the membrane. Residues 32 to 54 (KAKFGDKPLSKLDLGESEPKESE) are compositionally biased toward basic and acidic residues. The disordered stretch occupies residues 32–60 (KAKFGDKPLSKLDLGESEPKESEMYVAPE).

The protein belongs to the ZipA family. Interacts with FtsZ via their C-terminal domains.

The protein resides in the cell inner membrane. In terms of biological role, essential cell division protein that stabilizes the FtsZ protofilaments by cross-linking them and that serves as a cytoplasmic membrane anchor for the Z ring. Also required for the recruitment to the septal ring of downstream cell division proteins. This chain is Cell division protein ZipA, found in Vibrio vulnificus (strain CMCP6).